We begin with the raw amino-acid sequence, 268 residues long: Trypsin-like protease (268 aa).

The first 41 residues, 1-41 (MTHTTTIAAKRGGLALAKKAAAAGAVALAVASLQPVSAAHA), serve as a signal peptide directing secretion. A propeptide spans 42–45 (ADAR) (activation peptide). The region spanning 46–266 (VIGGKPAAQN…FAKDIAKAAS (221 aa)) is the Peptidase S1 domain. Cysteines 67 and 83 form a disulfide. Active-site charge relay system residues include His-82 and Asp-127. 2 disulfide bridges follow: Cys-187–Cys-202 and Cys-213–Cys-242. The Charge relay system role is filled by Ser-217.

This sequence belongs to the peptidase S1 family.

Protease that shows preferential cleavage after Arg and Lys residues. This Streptomyces glaucescens protein is Trypsin-like protease.